The sequence spans 522 residues: Cytochrome b mRNA maturase bI3 (522 aa).

Residues 1 to 31 (MTIRKSNPYLSLVNSYLMDSPQPSSMNYWWN) lie on the Mitochondrial matrix side of the membrane. The tract at residues 1–163 (MTIRKSNPYL…MPFMGGDLVP (163 aa)) is cytochrome b. Residues 32-52 (VGSLLGLCLVMQMASGMFLAM) traverse the membrane as a helical segment. The Mitochondrial intermembrane segment spans residues 53-84 (HYSSSMELAFNSVEHMMRDVNAGWLMRYIHAN). Residues 85–105 (GASFFFMCLYLHMGKALYYGS) form a helical membrane-spanning segment. At 106–110 (YKSPR) the chain is on the mitochondrial matrix side. Residues 111–131 (VLVWSMGVMMFMLTMATAFMG) traverse the membrane as a helical segment. The Mitochondrial intermembrane segment spans residues 132 to 154 (YCLVYGQMSHWGATVITNLLSAM). Residues 155-175 (PFMGGDLVPLSIILSLYLLYI) form a helical membrane-spanning segment. Positions 164-522 (LSIILSLYLL…PYMSWHQKEQ (359 aa)) are maturase. Topologically, residues 176 to 522 (SLKTFMKMIF…PYMSWHQKEQ (347 aa)) are mitochondrial matrix.

It in the N-terminal section; belongs to the cytochrome b family. The protein in the C-terminal section; belongs to the LAGLIDADG endonuclease family.

It is found in the mitochondrion inner membrane. Mitochondrial mRNA maturase required for splicing of intron 3 of the cytochrome b (COB) gene, containing its own coding sequence. The sequence is that of Cytochrome b mRNA maturase bI3 (bI3) from Debaryomyces hansenii (strain ATCC 36239 / CBS 767 / BCRC 21394 / JCM 1990 / NBRC 0083 / IGC 2968) (Yeast).